The sequence spans 342 residues: Biotin synthase (342 aa).

Positions 38-262 (GQVQISTLLS…MMPTSYVRLS (225 aa)) constitute a Radical SAM core domain. [4Fe-4S] cluster-binding residues include cysteine 53, cysteine 57, and cysteine 60. 4 residues coordinate [2Fe-2S] cluster: cysteine 97, cysteine 128, cysteine 188, and arginine 260.

Belongs to the radical SAM superfamily. Biotin synthase family. As to quaternary structure, homodimer. [4Fe-4S] cluster is required as a cofactor. Requires [2Fe-2S] cluster as cofactor.

The catalysed reaction is (4R,5S)-dethiobiotin + (sulfur carrier)-SH + 2 reduced [2Fe-2S]-[ferredoxin] + 2 S-adenosyl-L-methionine = (sulfur carrier)-H + biotin + 2 5'-deoxyadenosine + 2 L-methionine + 2 oxidized [2Fe-2S]-[ferredoxin]. It participates in cofactor biosynthesis; biotin biosynthesis; biotin from 7,8-diaminononanoate: step 2/2. Catalyzes the conversion of dethiobiotin (DTB) to biotin by the insertion of a sulfur atom into dethiobiotin via a radical-based mechanism. The sequence is that of Biotin synthase from Baumannia cicadellinicola subsp. Homalodisca coagulata.